We begin with the raw amino-acid sequence, 569 residues long: Protein angel homolog 2 (569 aa).

Disordered stretches follow at residues 1–22 (MRKGRHMPRHTNANYARPGVSP), 63–92 (LQHPSSSFSTVRHPFNRPPRPPDPYQWSSW), and 109–155 (GLME…WLRN). Over residues 63-72 (LQHPSSSFST) the composition is skewed to polar residues. Over residues 139-150 (PPKGSRSPKGSP) the composition is skewed to low complexity.

Belongs to the CCR4/nocturin family.

The sequence is that of Protein angel homolog 2 (angel2) from Danio rerio (Zebrafish).